The following is a 93-amino-acid chain: Small ribosomal subunit protein uS19 (93 aa).

Belongs to the universal ribosomal protein uS19 family.

Functionally, protein S19 forms a complex with S13 that binds strongly to the 16S ribosomal RNA. The protein is Small ribosomal subunit protein uS19 of Cutibacterium acnes (strain DSM 16379 / KPA171202) (Propionibacterium acnes).